Consider the following 423-residue polypeptide: GPI mannosyltransferase 2 (423 aa).

The next 9 membrane-spanning stretches (helical) occupy residues 7–27, 102–122, 128–148, 151–171, 191–211, 228–248, 298–318, 333–353, and 400–420; these read LTLI…ILSG, VILG…LVLY, IFNP…PTAT, APYT…LLSI, TGIF…AHIF, FLSA…TETV, LAMP…SHLV, PPPI…LLLF, and YWIG…AGHY.

This sequence belongs to the PIGV family.

The protein resides in the endoplasmic reticulum membrane. The protein operates within glycolipid biosynthesis; glycosylphosphatidylinositol-anchor biosynthesis. In terms of biological role, mannosyltransferase involved in glycosylphosphatidylinositol-anchor biosynthesis. Transfers the second mannose to the glycosylphosphatidylinositol during GPI precursor assembly. This Cryptococcus neoformans var. neoformans serotype D (strain B-3501A) (Filobasidiella neoformans) protein is GPI mannosyltransferase 2 (GPI18).